An 89-amino-acid polypeptide reads, in one-letter code: Small ribosomal subunit protein uS14 (89 aa).

This sequence belongs to the universal ribosomal protein uS14 family. Part of the 30S ribosomal subunit. Contacts proteins S3 and S10.

Binds 16S rRNA, required for the assembly of 30S particles and may also be responsible for determining the conformation of the 16S rRNA at the A site. In Streptococcus pneumoniae serotype 2 (strain D39 / NCTC 7466), this protein is Small ribosomal subunit protein uS14.